A 394-amino-acid polypeptide reads, in one-letter code: MVDRDIRIAVVGAGVAGLTVAALLRDRGVDCRVFERAPRLVAVGAGIQLSPNGVRVLHGLGLRDSLAATGVRARAIETRSWADGAPIARTPLGDRCEELYGAPYYLIHRADLHRCLTSLLPASAVELGRACARVEERPDAVRLHFTDGTMADADLVIGADGVHSVVRRSVVRDAPRYAGYAVHRGLVPASVVPSFRDDPRVMFWLGPGRHVTYYPVAGGRTVHFSAVGVSPEESPGGGPEDLGAAFGHWHEEVRRVVTSASSVTRWGLYDRDIPDRYATGRVVLLGDAAHPTLPYLSQGANQALEDVTTLVGCLDARPGAPQEAVRQYESLRLPRTAEVHRRARRLAEEFHLPDGPECTDRDQRMRATQDPTHLAWLYGRTAGLPDASDLAPRP.

FAD-binding residues include A16 and R109. The active-site Proton acceptor is the Y214. D287 contributes to the FAD binding site.

The protein belongs to the 6-hydroxynicotinate 3-monooxygenase family. FAD is required as a cofactor.

The enzyme catalyses 3-amino-4-hydroxybenzoate + NADPH + O2 + H(+) = 3-amino-2,4-dihydroxybenzoate + NADP(+) + H2O. It participates in antibiotic biosynthesis. Its function is as follows. Part of a gene cluster involved in the biosynthesis of cremeomycin, a light-sensitive o-diazoquinone with antibacterial and antiproliferative effects. Catalyzes the hydroxylation of 3-amino-4-hydroxybenzoate (3,4-AHBA) to 3-amino-2,4-dihydroxybenzoate (3,2,4-ADHBA). The chain is 3-amino-4-hydroxybenzoate 2-monooxygenase from Streptomyces cremeus.